The chain runs to 114 residues: Non-specific lipid-transfer protein 2 (114 aa).

Positions 1–23 (MEMFGKIACFVVFCMVVVAPHAE) are cleaved as a signal peptide. 4 cysteine pairs are disulfide-bonded: Cys27-Cys73, Cys37-Cys50, Cys51-Cys96, and Cys71-Cys110.

The protein belongs to the plant LTP family.

Its function is as follows. Plant non-specific lipid-transfer proteins transfer phospholipids as well as galactolipids across membranes. May play a role in wax or cutin deposition in the cell walls of expanding epidermal cells and certain secretory tissues. The chain is Non-specific lipid-transfer protein 2 (LE16) from Solanum lycopersicum (Tomato).